A 451-amino-acid chain; its full sequence is Exodeoxyribonuclease 7 large subunit (451 aa).

The protein belongs to the XseA family. Heterooligomer composed of large and small subunits.

It is found in the cytoplasm. It carries out the reaction Exonucleolytic cleavage in either 5'- to 3'- or 3'- to 5'-direction to yield nucleoside 5'-phosphates.. Functionally, bidirectionally degrades single-stranded DNA into large acid-insoluble oligonucleotides, which are then degraded further into small acid-soluble oligonucleotides. In Neisseria meningitidis serogroup C / serotype 2a (strain ATCC 700532 / DSM 15464 / FAM18), this protein is Exodeoxyribonuclease 7 large subunit.